The following is a 459-amino-acid chain: Ribulose bisphosphate carboxylase large chain (459 aa).

The propeptide occupies 1-2 (MS). An N-acetylproline modification is found at Pro3. An N6,N6,N6-trimethyllysine modification is found at Lys14. Substrate is bound by residues Asn123 and Thr173. The Proton acceptor role is filled by Lys175. Position 177 (Lys177) interacts with substrate. 3 residues coordinate Mg(2+): Lys201, Asp203, and Glu204. Lys201 carries the post-translational modification N6-carboxylysine. His294 serves as the catalytic Proton acceptor. 3 residues coordinate substrate: Arg295, His327, and Ser379.

This sequence belongs to the RuBisCO large chain family. Type I subfamily. As to quaternary structure, heterohexadecamer of 8 large chains and 8 small chains; disulfide-linked. The disulfide link is formed within the large subunit homodimers. Requires Mg(2+) as cofactor. Post-translationally, the disulfide bond which can form in the large chain dimeric partners within the hexadecamer appears to be associated with oxidative stress and protein turnover.

It is found in the plastid. The protein resides in the chloroplast. It carries out the reaction 2 (2R)-3-phosphoglycerate + 2 H(+) = D-ribulose 1,5-bisphosphate + CO2 + H2O. The catalysed reaction is D-ribulose 1,5-bisphosphate + O2 = 2-phosphoglycolate + (2R)-3-phosphoglycerate + 2 H(+). In terms of biological role, ruBisCO catalyzes two reactions: the carboxylation of D-ribulose 1,5-bisphosphate, the primary event in carbon dioxide fixation, as well as the oxidative fragmentation of the pentose substrate in the photorespiration process. Both reactions occur simultaneously and in competition at the same active site. The polypeptide is Ribulose bisphosphate carboxylase large chain (Streptopus lanceolatus (Rose twisted stalk)).